A 499-amino-acid chain; its full sequence is Glutamyl-tRNA(Gln) amidotransferase subunit A (499 aa).

Residues K79 and S159 each act as charge relay system in the active site. Catalysis depends on S183, which acts as the Acyl-ester intermediate.

Belongs to the amidase family. GatA subfamily. Heterotrimer of A, B and C subunits.

It carries out the reaction L-glutamyl-tRNA(Gln) + L-glutamine + ATP + H2O = L-glutaminyl-tRNA(Gln) + L-glutamate + ADP + phosphate + H(+). Functionally, allows the formation of correctly charged Gln-tRNA(Gln) through the transamidation of misacylated Glu-tRNA(Gln) in organisms which lack glutaminyl-tRNA synthetase. The reaction takes place in the presence of glutamine and ATP through an activated gamma-phospho-Glu-tRNA(Gln). In Granulibacter bethesdensis (strain ATCC BAA-1260 / CGDNIH1), this protein is Glutamyl-tRNA(Gln) amidotransferase subunit A.